A 384-amino-acid chain; its full sequence is MNYSALITLAQKLIQQPSVSPNHHSCHEIIANYLEKLNFNVELMRFDNTLNLWAFHSCKKQQKHTTLLFIGHTDVVDPGDPQFWDYPPFSGLVHNNMLHGRGAIDMKGALAAMLVATANFIDQYPNYQGRIAFLITSDEEGSGINGTTKVVESLIARNEHINYCIVGEPSSQDQLGDVIKNGRRGSLTGQLTIHGSQGHVAYPQFSKNPIHLIIPALSDLLNITWDREKSILFPPTAIQITNIYSNHKNNNVTPHTVILNFNVRFNDKCSIDNIKRYINDIFTRHTLPYNINWKLSAEPYFSKPGQLTNVAINAIKYYQKFEPRLETTGGTSDGRFIAKMGTEVIELGARNHMIHKVNEYIDLIDLKLLSSIYKKIIEDLILIQ.

Residue H72 coordinates Zn(2+). The active site involves D74. A Zn(2+)-binding site is contributed by D105. E139 functions as the Proton acceptor in the catalytic mechanism. Positions 140, 168, and 355 each coordinate Zn(2+).

It belongs to the peptidase M20A family. DapE subfamily. In terms of assembly, homodimer. Requires Zn(2+) as cofactor. Co(2+) is required as a cofactor.

It carries out the reaction N-succinyl-(2S,6S)-2,6-diaminopimelate + H2O = (2S,6S)-2,6-diaminopimelate + succinate. It functions in the pathway amino-acid biosynthesis; L-lysine biosynthesis via DAP pathway; LL-2,6-diaminopimelate from (S)-tetrahydrodipicolinate (succinylase route): step 3/3. Its function is as follows. Catalyzes the hydrolysis of N-succinyl-L,L-diaminopimelic acid (SDAP), forming succinate and LL-2,6-diaminopimelate (DAP), an intermediate involved in the bacterial biosynthesis of lysine and meso-diaminopimelic acid, an essential component of bacterial cell walls. The chain is Succinyl-diaminopimelate desuccinylase from Blochmanniella pennsylvanica (strain BPEN).